We begin with the raw amino-acid sequence, 118 residues long: Large ribosomal subunit protein uL18 (118 aa).

Positions methionine 1–glycine 24 are disordered. Residues isoleucine 10–glycine 20 are compositionally biased toward basic residues.

It belongs to the universal ribosomal protein uL18 family. As to quaternary structure, part of the 50S ribosomal subunit; part of the 5S rRNA/L5/L18/L25 subcomplex. Contacts the 5S and 23S rRNAs.

Its function is as follows. This is one of the proteins that bind and probably mediate the attachment of the 5S RNA into the large ribosomal subunit, where it forms part of the central protuberance. This Streptococcus agalactiae serotype III (strain NEM316) protein is Large ribosomal subunit protein uL18.